The sequence spans 250 residues: Diphthine synthase (250 aa).

S-adenosyl-L-methionine is bound by residues leucine 9, aspartate 85, valine 88, 113–114 (SI), leucine 165, alanine 202, and histidine 227.

It belongs to the diphthine synthase family. Homodimer.

The catalysed reaction is 2-[(3S)-amino-3-carboxypropyl]-L-histidyl-[translation elongation factor 2] + 3 S-adenosyl-L-methionine = diphthine-[translation elongation factor 2] + 3 S-adenosyl-L-homocysteine + 3 H(+). Its pathway is protein modification; peptidyl-diphthamide biosynthesis. In terms of biological role, S-adenosyl-L-methionine-dependent methyltransferase that catalyzes the trimethylation of the amino group of the modified target histidine residue in translation elongation factor 2 (EF-2), to form an intermediate called diphthine. The three successive methylation reactions represent the second step of diphthamide biosynthesis. The polypeptide is Diphthine synthase (Methanoregula boonei (strain DSM 21154 / JCM 14090 / 6A8)).